A 171-amino-acid polypeptide reads, in one-letter code: Macro domain-containing protein RSc0334 (171 aa).

A Macro domain is found at Met1 to Arg171.

The protein belongs to the MacroD-type family.

In Ralstonia nicotianae (strain ATCC BAA-1114 / GMI1000) (Ralstonia solanacearum), this protein is Macro domain-containing protein RSc0334.